The following is a 612-amino-acid chain: Netrin unc-6 (612 aa).

Positions 1–21 are cleaved as a signal peptide; that stretch reads MITSVLRYVLALYFCMGIAHG. A Laminin N-terminal domain is found at 43–290; that stretch reads RPVRCVPEFI…SMGELAVGGR (248 aa). Residues N114, N128, and N268 are each glycosylated (N-linked (GlcNAc...) asparagine). A disulfide bridge connects residues C117 and C149. Intrachain disulfides connect C291–C300, C293–C310, C312–C321, C324–C344, C347–C356, C349–C374, C377–C386, C389–C407, C410–C422, C412–C429, C431–C440, C443–C457, C478–C547, and C494–C604. Laminin EGF-like domains follow at residues 291–346, 347–409, and 410–459; these read CKCN…SCVA, CNCN…ACKS, and CGCH…PCIK. N368 carries an N-linked (GlcNAc...) asparagine glycan. N-linked (GlcNAc...) asparagine glycosylation occurs at N423. An NTR domain is found at 478–604; sequence CSKCRIVPKR…FSKKDKLGQC (127 aa). A glycan (N-linked (GlcNAc...) asparagine) is linked at N564.

Binds to unc-5 and unc-40 receptors.

The protein resides in the secreted. The protein localises to the extracellular space. It localises to the extracellular matrix. Its subcellular location is the basement membrane. Functionally, component of an extracellular matrix cue that guides dorsoventral migrations on the epidermis. Required for the guidance of pioneer axons and migrating cells along the body wall. In particular, it is required for the guidance of axons from neurons, including SubL neurons and AIY interneurons, into the nerve ring. During gonad morphogenesis, involved in distal tip cell (DTC) migration from the dorsal side of the hermaphrodite body to the midbody to allow for formation of gonad arms. Its association with either unc-40 or unc-5 receptors will lead to axon attraction or repulsion, respectively. Involved in dendritic morphogenesis; may act by association with unc-40 at the tips of growing dendrites for interaction with unc-5 on the apposing branch to induce mutual repulsion. Involved in the positioning of ray 1, the most anterior ray sensilium, in the male tail. Required for the formation of synapses between the AVA interneurons and the PHB sensory neurons. The protein is Netrin unc-6 of Caenorhabditis elegans.